The sequence spans 457 residues: Aromatic amino acid transport protein AroP (457 aa).

Residues 1–18 (MMEGQQHGEQLKRGLKNR) lie on the Cytoplasmic side of the membrane. Residues 19 to 39 (HIQLIALGGAIGTGLFLGSAS) form a helical membrane-spanning segment. Residues 40–42 (VIQ) lie on the Periplasmic side of the membrane. The chain crosses the membrane as a helical span at residues 43–63 (SAGPGIILGYAIAGFIAFLIM). Topologically, residues 64 to 98 (RQLGEMVVEEPVAGSFSHFAYKYWGSFAGFASGWN) are cytoplasmic. Residues 99–119 (YWVLYVLVAMAELTAVGKYIQ) traverse the membrane as a helical segment. Residues 120 to 124 (FWYPE) lie on the Periplasmic side of the membrane. The helical transmembrane segment at 125 to 145 (IPTWVSAAVFFVVINAINLTN) threads the bilayer. The Cytoplasmic segment spans residues 146-147 (VK). Residues 148-168 (VFGEMEFWFAIIKVIAVVAMI) traverse the membrane as a helical segment. Over 169-192 (IFGGWLLFSGNGGPQATVSNLWDQ) the chain is Periplasmic. A helical membrane pass occupies residues 193–213 (GGFLPHGFTGLVMMMAIIMFS). Topologically, residues 214-239 (FGGLELVGITAAEADNPEQSIPKATN) are cytoplasmic. The chain crosses the membrane as a helical span at residues 240–260 (QVIYRILIFYIGSLAVLLSLM). Over 261–279 (PWTRVTADTSPFVLIFHEL) the chain is Periplasmic. Residues 280–300 (GDTFVANALNIVVLTAALSVY) form a helical membrane-spanning segment. Topologically, residues 301 to 330 (NSCVYCNSRMLFGLAQQGNAPKALASVDKR) are cytoplasmic. The helical transmembrane segment at 331–351 (GVPVNTILVSALVTALCVLIN) threads the bilayer. Residues 352–359 (YLAPESAF) are Periplasmic-facing. Residues 360–380 (GLLMALVVSALVINWAMISLA) traverse the membrane as a helical segment. Topologically, residues 381 to 402 (HMKFRRAKQEQGVVTRFPALLY) are cytoplasmic. Residues 403-423 (PLGNWICLLFMAAVLVIMLMT) traverse the membrane as a helical segment. The Periplasmic segment spans residues 424–426 (PGM). Residues 427 to 447 (AISVYLIPVWLIVLGIGYLFK) form a helical membrane-spanning segment. The Cytoplasmic segment spans residues 448 to 457 (EKTAKAVKAH).

It belongs to the amino acid-polyamine-organocation (APC) superfamily. Amino acid transporter (AAT) (TC 2.A.3.1) family.

It is found in the cell inner membrane. It carries out the reaction L-phenylalanine(in) + H(+)(in) = L-phenylalanine(out) + H(+)(out). It catalyses the reaction L-tryptophan(in) + H(+)(in) = L-tryptophan(out) + H(+)(out). The catalysed reaction is L-tyrosine(in) + H(+)(in) = L-tyrosine(out) + H(+)(out). Its activity is regulated as follows. Strong, mutual inhibition of uptake by tyrosine, phenylalanine, and tryptophan. Transport is also inhibited by the aromatic analogs p-fluorophenylalanine, beta-2-thienylalanine and 5-methyltryptophan. Permease that is involved in the active transport across the cytoplasmic membrane of all three aromatic amino acids, phenylalanine, tyrosine and tryptophan. The polypeptide is Aromatic amino acid transport protein AroP (Escherichia coli (strain K12)).